Consider the following 832-residue polypeptide: Cadherin-17 (832 aa).

The signal sequence occupies residues 1–22 (MILQAHLHSLCLLMLYLATGYG). Residues 23 to 787 (QEGKFSGPLK…HQTGIPTVGM (765 aa)) lie on the Extracellular side of the membrane. Cadherin domains follow at residues 30-128 (PLKP…TFLQ), 129-244 (SKYE…APKP), 245-340 (VEMV…PPTC), 341-449 (PSPV…IPIF), 450-566 (EKSD…APQF), 567-667 (SQHV…PPRL), and 668-777 (AKDY…RPAG). N-linked (GlcNAc...) asparagine glycans are attached at residues Asn-149, Asn-184, Asn-250, Asn-419, Asn-456, Asn-546, Asn-587, and Asn-722. A helical transmembrane segment spans residues 788–808 (AVGILLTTLLVIGIILAVVFI). Residues 809–832 (RIKKDKGKDNVESAQASEVKPLRS) are Cytoplasmic-facing.

As to expression, expressed in the gastrointestinal tract and pancreatic duct. Not detected in kidney, lung, liver, brain, adrenal gland and skin.

Its subcellular location is the cell membrane. Cadherins are calcium-dependent cell adhesion proteins. They preferentially interact with themselves in a homophilic manner in connecting cells; cadherins may thus contribute to the sorting of heterogeneous cell types. LI-cadherin may have a role in the morphological organization of liver and intestine. Involved in intestinal peptide transport. The protein is Cadherin-17 (CDH17) of Homo sapiens (Human).